The chain runs to 448 residues: Pentatricopeptide repeat-containing protein At1g80550, mitochondrial (448 aa).

A mitochondrion-targeting transit peptide spans 1–21; sequence MLLLRRLNRVRIASPYSVRLL. PPR repeat units follow at residues 80–110, 116–146, 150–186, 188–222, 223–257, 258–292, 293–327, 331–359, 360–394, and 395–429; these read TTETFNRVIDILGKYFEFEISWALINRMIGN, NHVTFRIVFKRYVTAHLVQEAIDAYDKLDDF, DETSFYNLVDALCEHKHVVEAEELCFGKNVIGNGFSV, NTKIHNLILRGWSKLGWWGKCKEYWKKMDTEGVTK, DLFSYSIYMDIMCKSGKPWKAVKLYKEMKSRRMKL, DVVAYNTVIRAIGASQGVEFGIRVFREMRERGCEP, NVATHNTIIKLLCEDGRMRDAYRMLDEMPKRGCQP, TYMCLFSRLEKPSEILSLFGRMIRSGVRP, KMDTYVMLMRKFERWGFLQPVLYVWKTMKESGDTP, and DSAAYNAVIDALIQKGMLDMAREYEEEMIERGLSP.

Belongs to the PPR family. P subfamily.

It localises to the mitochondrion. In Arabidopsis thaliana (Mouse-ear cress), this protein is Pentatricopeptide repeat-containing protein At1g80550, mitochondrial.